Here is a 339-residue protein sequence, read N- to C-terminus: Methylglutaconyl-CoA hydratase, mitochondrial (339 aa).

A mitochondrion-targeting transit peptide spans 1–67 (MAAAVAAAPG…AGGPAPKRGY (67 aa)). Lys-100 bears the N6-acetyllysine; alternate mark. Lys-100 is subject to N6-succinyllysine; alternate. An RNA-binding region spans residues 105 to 119 (KNLIKMLSKAVDALK). Lys-109 is modified (N6-succinyllysine). An N6-acetyllysine; alternate mark is found at Lys-113 and Lys-144. Residues Lys-113 and Lys-144 each carry the N6-succinyllysine; alternate modification. Lys-148 and Lys-160 each carry N6-succinyllysine. N6-acetyllysine; alternate occurs at positions 204 and 211. 2 positions are modified to N6-succinyllysine; alternate: Lys-204 and Lys-211. Residue Lys-329 is modified to N6-succinyllysine.

This sequence belongs to the enoyl-CoA hydratase/isomerase family. As to quaternary structure, homohexamer.

The protein localises to the mitochondrion. The enzyme catalyses (3S)-3-hydroxy-3-methylglutaryl-CoA = 3-methyl-(2E)-glutaconyl-CoA + H2O. The catalysed reaction is (3S)-citramalyl-CoA = itaconyl-CoA + H2O. It catalyses the reaction 3-hydroxyisovaleryl-CoA = 3-methylbut-2-enoyl-CoA + H2O. It carries out the reaction (S)-3-hydroxyglutaryl-CoA = (2E)-glutaconyl-CoA + H2O. Its pathway is amino-acid degradation; L-leucine degradation; (S)-3-hydroxy-3-methylglutaryl-CoA from 3-isovaleryl-CoA: step 3/3. Functionally, catalyzes the fifth step in the leucine degradation pathway, the reversible hydration of 3-methylglutaconyl-CoA (3-MG-CoA) to 3-hydroxy-3-methylglutaryl-CoA (HMG-CoA). Can catalyze the reverse reaction but at a much lower rate in vitro. HMG-CoA is then quickly degraded by another enzyme (such as HMG-CoA lyase) to give acetyl-CoA and acetoacetate. Uses other substrates such as (2E)-glutaconyl-CoA efficiently in vitro, and to a lesser extent 3-methylcrotonyl-CoA (3-methyl-(2E)-butenoyl-CoA), crotonyl-CoA ((2E)-butenoyl-CoA) and 3-hydroxybutanoyl-CoA (the missing carboxylate reduces affinity to the active site). Originally it was identified as an RNA-binding protein as it binds to AU-rich elements (AREs) in vitro. AREs direct rapid RNA degradation and mRNA deadenylation. Might have itaconyl-CoA hydratase activity, converting itaconyl-CoA into citramalyl-CoA in the C5-dicarboxylate catabolism pathway. The C5-dicarboxylate catabolism pathway is required to detoxify itaconate, an antimicrobial metabolite and immunomodulator produced by macrophages during certain infections, that can act as a vitamin B12-poisoning metabolite. This is Methylglutaconyl-CoA hydratase, mitochondrial (AUH) from Homo sapiens (Human).